A 245-amino-acid chain; its full sequence is MDMAWQMMQLLLLALVTAAGSAQPRSARARTDLLNVCMNAKHHKTQPSPEDELYGQCSPWKKNACCTASTSQELHKDTSRLYNFNWDHCGKMEPTCKRHFIQDSCLYECSPNLGPWIRQVNQSWRKERILNVPLCKEDCERWWEDCRTSYTCKSNWHKGWNWTSGINECPAGALCSTFESYFPTPAALCEGLWSHSFKVSNYSRGSGRCIQMWFDSAQGNPNEEVAKFYAAAMNAGAPSRGIIDS.

An N-terminal signal peptide occupies residues 1 to 22 (MDMAWQMMQLLLLALVTAAGSA). Disulfide bonds link Cys37–Cys65, Cys57–Cys105, Cys66–Cys109, Cys89–Cys175, Cys96–Cys146, Cys135–Cys209, Cys139–Cys189, and Cys152–Cys169. Folate is bound by residues Asp103 and Tyr107. N-linked (GlcNAc...) asparagine glycosylation occurs at Asn121. Residues 124–128 (WRKER), 157–162 (HKGWNW), and Ser196 each bind folate. Asn161 carries an N-linked (GlcNAc...) asparagine glycan. Asn201 is a glycosylation site (N-linked (GlcNAc...) asparagine).

This sequence belongs to the folate receptor family. In terms of tissue distribution, spleen, thymus, bone marrow, ovarian carcinoma, and uterine carcinoma.

The protein localises to the secreted. Functionally, binds to folate and reduced folic acid derivatives and mediates delivery of 5-methyltetrahydrofolate to the interior of cells. Isoform Short does not bind folate. This chain is Folate receptor gamma (FOLR3), found in Homo sapiens (Human).